The chain runs to 374 residues: Aminomethyltransferase (374 aa).

It belongs to the GcvT family. In terms of assembly, the glycine cleavage system is composed of four proteins: P, T, L and H.

It carries out the reaction N(6)-[(R)-S(8)-aminomethyldihydrolipoyl]-L-lysyl-[protein] + (6S)-5,6,7,8-tetrahydrofolate = N(6)-[(R)-dihydrolipoyl]-L-lysyl-[protein] + (6R)-5,10-methylene-5,6,7,8-tetrahydrofolate + NH4(+). In terms of biological role, the glycine cleavage system catalyzes the degradation of glycine. The polypeptide is Aminomethyltransferase (Edwardsiella ictaluri (strain 93-146)).